The following is a 1429-amino-acid chain: Probable ATP-dependent RNA helicase spindle-E (1429 aa).

In terms of domain architecture, Helicase ATP-binding spans 121-288 (VNAINTHQVV…FSTKVSVPPV (168 aa)). 134-141 (GETGCGKT) provides a ligand contact to ATP. A DEAH box motif is present at residues 234 to 237 (DEVH). One can recognise a Helicase C-terminal domain in the interval 349-521 (QSEQSYDDAK…NSVLKAKLLD (173 aa)). The 64-residue stretch at 933-996 (AGVLTKGMMV…RLMTKELLSQ (64 aa)) folds into the Tudor domain.

The protein belongs to the DEAD box helicase family. DEAH subfamily.

Its subcellular location is the cytoplasm. It carries out the reaction ATP + H2O = ADP + phosphate + H(+). Probable ATP-binding RNA helicase which plays a central role during spermatogenesis and oogenesis by repressing transposable elements and preventing their mobilization, which is essential for the germline integrity. Acts via the piRNA metabolic process, which mediates the repression of transposable elements during meiosis by forming complexes composed of piRNAs and Piwi and govern the methylation and subsequent repression of transposons. Involved in the repression of LTR retrotransposon copia. Also involved in telomere regulation by repressing specialized telomeric retroelements HeT-A, TAHRE, and TART; Drosophila telomeres being maintained by transposition of specialized telomeric retroelements. Involved in telomeric trans-silencing, a repression mechanism by which a transposon or a transgene inserted in subtelomeric heterochromatin has the capacity to repress in trans in the female germline, a homologous transposon, or transgene located in euchromatin. Involved in the repression of testis-expressed Stellate genes by the homologous Su(Ste) repeats. Required for anteroposterior and dorsoventral axis formation during oogenesis. In Drosophila ananassae (Fruit fly), this protein is Probable ATP-dependent RNA helicase spindle-E (spn-E).